We begin with the raw amino-acid sequence, 314 residues long: Curved DNA-binding protein (314 aa).

Positions 5–69 (DYYKILDVEP…EKRAEYDELR (65 aa)) constitute a J domain. The interval 73–92 (RQGRPFQTPPGWQSRAGAGA) is disordered.

It localises to the cytoplasm. Its subcellular location is the nucleoid. DNA-binding protein that preferentially recognizes a curved DNA sequence. It is probably a functional analog of DnaJ; displays overlapping activities with DnaJ, but functions under different conditions, probably acting as a molecular chaperone in an adaptive response to environmental stresses other than heat shock. Lacks autonomous chaperone activity; binds native substrates and targets them for recognition by DnaK. Its activity is inhibited by the binding of CbpM. The chain is Curved DNA-binding protein from Pseudomonas syringae pv. tomato (strain ATCC BAA-871 / DC3000).